The following is a 448-amino-acid chain: NADP-specific glutamate dehydrogenase (448 aa).

Residues lysine 88, glutamine 109, and lysine 112 each contribute to the substrate site. Residue lysine 124 is the Proton donor of the active site. Residue glycine 163 participates in substrate binding. Positions 207 and 238 each coordinate NADP(+). Serine 375 contributes to the substrate binding site.

The protein belongs to the Glu/Leu/Phe/Val dehydrogenases family. In terms of assembly, homohexamer.

The catalysed reaction is L-glutamate + NADP(+) + H2O = 2-oxoglutarate + NH4(+) + NADPH + H(+). Its function is as follows. Catalyzes the reversible oxidative deamination of glutamate to alpha-ketoglutarate and ammonia. This Psychrobacter sp. (strain TAD1) protein is NADP-specific glutamate dehydrogenase (gdhA).